The following is a 288-amino-acid chain: Putative branched-chain-amino-acid aminotransferase (288 aa).

Position 146 is an N6-(pyridoxal phosphate)lysine (Lys-146).

The protein belongs to the class-IV pyridoxal-phosphate-dependent aminotransferase family. Pyridoxal 5'-phosphate is required as a cofactor.

It carries out the reaction L-leucine + 2-oxoglutarate = 4-methyl-2-oxopentanoate + L-glutamate. The enzyme catalyses L-isoleucine + 2-oxoglutarate = (S)-3-methyl-2-oxopentanoate + L-glutamate. It catalyses the reaction L-valine + 2-oxoglutarate = 3-methyl-2-oxobutanoate + L-glutamate. The protein operates within amino-acid biosynthesis; L-isoleucine biosynthesis; L-isoleucine from 2-oxobutanoate: step 4/4. Its pathway is amino-acid biosynthesis; L-leucine biosynthesis; L-leucine from 3-methyl-2-oxobutanoate: step 4/4. It functions in the pathway amino-acid biosynthesis; L-valine biosynthesis; L-valine from pyruvate: step 4/4. Acts on leucine, isoleucine and valine. This Methanocaldococcus jannaschii (strain ATCC 43067 / DSM 2661 / JAL-1 / JCM 10045 / NBRC 100440) (Methanococcus jannaschii) protein is Putative branched-chain-amino-acid aminotransferase (ilvE).